Consider the following 154-residue polypeptide: Myoglobin (154 aa).

The Globin domain occupies 2–148 (VLSEGEWQLV…FRKDIAAKYK (147 aa)). At Ser4 the chain carries Phosphoserine. His65 provides a ligand contact to nitrite. His65 lines the O2 pocket. The residue at position 68 (Thr68) is a Phosphothreonine. His94 contributes to the heme b binding site.

The protein belongs to the globin family. As to quaternary structure, monomeric.

The protein resides in the cytoplasm. The protein localises to the sarcoplasm. The catalysed reaction is Fe(III)-heme b-[protein] + nitric oxide + H2O = Fe(II)-heme b-[protein] + nitrite + 2 H(+). It catalyses the reaction H2O2 + AH2 = A + 2 H2O. Functionally, monomeric heme protein which primary function is to store oxygen and facilitate its diffusion within muscle tissues. Reversibly binds oxygen through a pentacoordinated heme iron and enables its timely and efficient release as needed during periods of heightened demand. Depending on the oxidative conditions of tissues and cells, and in addition to its ability to bind oxygen, it also has a nitrite reductase activity whereby it regulates the production of bioactive nitric oxide. Under stress conditions, like hypoxia and anoxia, it also protects cells against reactive oxygen species thanks to its pseudoperoxidase activity. In Kogia breviceps (Pygmy sperm whale), this protein is Myoglobin (MB).